We begin with the raw amino-acid sequence, 61 residues long: Small ribosomal subunit protein uS14 (61 aa).

Zn(2+)-binding residues include C24, C27, C40, and C43.

It belongs to the universal ribosomal protein uS14 family. Zinc-binding uS14 subfamily. As to quaternary structure, part of the 30S ribosomal subunit. Contacts proteins S3 and S10. Zn(2+) serves as cofactor.

Functionally, binds 16S rRNA, required for the assembly of 30S particles and may also be responsible for determining the conformation of the 16S rRNA at the A site. This Desulfatibacillum aliphaticivorans protein is Small ribosomal subunit protein uS14.